A 419-amino-acid polypeptide reads, in one-letter code: Serine hydroxymethyltransferase (419 aa).

Residues leucine 118 and 122-124 each bind (6S)-5,6,7,8-tetrahydrofolate; that span reads GHL. At lysine 226 the chain carries N6-(pyridoxal phosphate)lysine. Glutamate 242 is a (6S)-5,6,7,8-tetrahydrofolate binding site.

Belongs to the SHMT family. Homodimer. It depends on pyridoxal 5'-phosphate as a cofactor.

It localises to the cytoplasm. It catalyses the reaction (6R)-5,10-methylene-5,6,7,8-tetrahydrofolate + glycine + H2O = (6S)-5,6,7,8-tetrahydrofolate + L-serine. The protein operates within one-carbon metabolism; tetrahydrofolate interconversion. It participates in amino-acid biosynthesis; glycine biosynthesis; glycine from L-serine: step 1/1. In terms of biological role, catalyzes the reversible interconversion of serine and glycine with tetrahydrofolate (THF) serving as the one-carbon carrier. This reaction serves as the major source of one-carbon groups required for the biosynthesis of purines, thymidylate, methionine, and other important biomolecules. Also exhibits THF-independent aldolase activity toward beta-hydroxyamino acids, producing glycine and aldehydes, via a retro-aldol mechanism. The chain is Serine hydroxymethyltransferase from Metamycoplasma arthritidis (strain 158L3-1) (Mycoplasma arthritidis).